A 456-amino-acid chain; its full sequence is Adenylosuccinate lyase (456 aa).

Residues 15–16, 90–92, and 122–123 each bind N(6)-(1,2-dicarboxyethyl)-AMP; these read RY, NHD, and TS. Catalysis depends on His-171, which acts as the Proton donor/acceptor. A N(6)-(1,2-dicarboxyethyl)-AMP-binding site is contributed by Gln-247. Ser-295 serves as the catalytic Proton donor/acceptor. N(6)-(1,2-dicarboxyethyl)-AMP contacts are provided by residues Ser-296, 301–303, Asn-309, Arg-335, and 340–344; these read KVN and STVLR.

This sequence belongs to the lyase 1 family. Adenylosuccinate lyase subfamily. In terms of assembly, homotetramer. Residues from neighboring subunits contribute catalytic and substrate-binding residues to each active site.

The enzyme catalyses N(6)-(1,2-dicarboxyethyl)-AMP = fumarate + AMP. The catalysed reaction is (2S)-2-[5-amino-1-(5-phospho-beta-D-ribosyl)imidazole-4-carboxamido]succinate = 5-amino-1-(5-phospho-beta-D-ribosyl)imidazole-4-carboxamide + fumarate. Its pathway is purine metabolism; AMP biosynthesis via de novo pathway; AMP from IMP: step 2/2. The protein operates within purine metabolism; IMP biosynthesis via de novo pathway; 5-amino-1-(5-phospho-D-ribosyl)imidazole-4-carboxamide from 5-amino-1-(5-phospho-D-ribosyl)imidazole-4-carboxylate: step 2/2. In terms of biological role, catalyzes two reactions in de novo purine nucleotide biosynthesis. Catalyzes the breakdown of 5-aminoimidazole- (N-succinylocarboxamide) ribotide (SAICAR or 2-[5-amino-1-(5-phospho-beta-D-ribosyl)imidazole-4-carboxamido]succinate) to 5-aminoimidazole-4-carboxamide ribotide (AICAR or 5-amino-1-(5-phospho-beta-D-ribosyl)imidazole-4-carboxamide) and fumarate, and of adenylosuccinate (ADS or N(6)-(1,2-dicarboxyethyl)-AMP) to adenosine monophosphate (AMP) and fumarate. The protein is Adenylosuccinate lyase (purB) of Legionella pneumophila subsp. pneumophila (strain Philadelphia 1 / ATCC 33152 / DSM 7513).